A 440-amino-acid chain; its full sequence is Glucoside xylosyltransferase 1 (440 aa).

The Cytoplasmic segment spans residues 1–6 (MRRYLR). The chain crosses the membrane as a helical; Signal-anchor for type II membrane protein span at residues 7–29 (VVVLCVACGFCSLLYAFSQLAVS). Residues 30–440 (LEEGTGGGGG…DRYARSPKEK (411 aa)) are Lumenal-facing. 3 N-linked (GlcNAc...) asparagine glycosylation sites follow: asparagine 173, asparagine 237, and asparagine 278.

It belongs to the glycosyltransferase 8 family.

It is found in the membrane. The enzyme catalyses 3-O-(beta-D-glucosyl)-L-seryl-[EGF-like domain protein] + UDP-alpha-D-xylose = 3-O-[alpha-D-xylosyl-(1-&gt;3)-beta-D-glucosyl]-L-seryl-[EGF-like domain protein] + UDP + H(+). Glycosyltransferase which elongates the O-linked glucose attached to EGF-like repeats in the extracellular domain of Notch proteins by catalyzing the addition of xylose. This chain is Glucoside xylosyltransferase 1 (GXYLT1), found in Homo sapiens (Human).